The sequence spans 288 residues: Protoheme IX farnesyltransferase (288 aa).

9 consecutive transmembrane segments (helical) span residues 16–36 (VWSL…NRFT), 37–57 (LTNI…SMGA), 88–108 (VKGL…LLFF), 111–131 (YLAA…YSYL), 138–158 (WNII…WYTV), 162–182 (FSVL…IHVW), 210–230 (AICI…PVFF), 236–256 (TYMI…VLFV), and 265–285 (LKLF…VLIF).

The protein belongs to the UbiA prenyltransferase family. Protoheme IX farnesyltransferase subfamily.

The protein localises to the cell membrane. It carries out the reaction heme b + (2E,6E)-farnesyl diphosphate + H2O = Fe(II)-heme o + diphosphate. The protein operates within porphyrin-containing compound metabolism; heme O biosynthesis; heme O from protoheme: step 1/1. Converts heme B (protoheme IX) to heme O by substitution of the vinyl group on carbon 2 of heme B porphyrin ring with a hydroxyethyl farnesyl side group. The sequence is that of Protoheme IX farnesyltransferase from Thermoplasma volcanium (strain ATCC 51530 / DSM 4299 / JCM 9571 / NBRC 15438 / GSS1).